We begin with the raw amino-acid sequence, 137 residues long: uncharacterized protein (137 aa).

The interval 116–137 (ARPPRGSGGTRTARNGARTASE) is disordered. Polar residues predominate over residues 125-137 (TRTARNGARTASE).

This is an uncharacterized protein from Mycobacterium bovis (strain ATCC BAA-935 / AF2122/97).